The primary structure comprises 376 residues: MARSTPCSQTSLAVPNHFSLVSHVTVPSEGVMPSPLSLCRCLPRELSPSVDSRSCSIPLVAPRRAGKLFLGTTPPRAPGLPRRLAWFSIDWEQVCLMHRLGSGGFGSVYKATYHGVPVAIKQVNKCTKDLRASQRSFWAELNIARLRHDNIVRVVAASTRTPEDSNSLGTIIMEFGGNVTLHQVIYGATRSPEPLSCREQLSLGKCLKYSLDVVNGLLFLHSQSILHLDLKPANILISEQDVCKISDFGCSQKLQDLRCRQASPHHIGGTYTHQAPEILKGEIATPKADIYSFGITLWQMTTREVPYSGEPQYVQYAVVAYNLRPSLAGAVFTASLTGKTLQNIIQSCWEARALQRPGAELLQRDLKALADSIEPM.

A Protein kinase domain is found at 94-376 (VCLMHRLGSG…KALADSIEPM (283 aa)). Residues 100-108 (LGSGGFGSV) and Lys-121 each bind ATP. Residue Asp-229 is the Proton acceptor of the active site.

The protein belongs to the protein kinase superfamily. Ser/Thr protein kinase family.

It catalyses the reaction L-seryl-[protein] + ATP = O-phospho-L-seryl-[protein] + ADP + H(+). The catalysed reaction is L-threonyl-[protein] + ATP = O-phospho-L-threonyl-[protein] + ADP + H(+). This is Serine/threonine-protein kinase-transforming protein mos (V-MOS) from Moloney murine sarcoma virus (strain m1) (MoMSV).